The following is a 183-amino-acid chain: MVPRLKSKYEKEIRPTLQKSLGFQSVMRVPKLEKIVINVGMGEAHTNPKAMEACLVEIGQITGQRPVKTFAKKSIAGFKVREGMVLGCKVTLRGHHMYEFLDRFINVALPRVRDFRGVNPKGFDGRGNYNLSVREQIIFPEIQFDKINTIYGINITFVTNTEVDKEAFELFQAFGMPYRTAGK.

This sequence belongs to the universal ribosomal protein uL5 family. Part of the 50S ribosomal subunit; part of the 5S rRNA/L5/L18/L25 subcomplex. Contacts the 5S rRNA and the P site tRNA. Forms a bridge to the 30S subunit in the 70S ribosome.

Its function is as follows. This is one of the proteins that bind and probably mediate the attachment of the 5S RNA into the large ribosomal subunit, where it forms part of the central protuberance. In the 70S ribosome it contacts protein S13 of the 30S subunit (bridge B1b), connecting the 2 subunits; this bridge is implicated in subunit movement. Contacts the P site tRNA; the 5S rRNA and some of its associated proteins might help stabilize positioning of ribosome-bound tRNAs. This is Large ribosomal subunit protein uL5 from Leptospira biflexa serovar Patoc (strain Patoc 1 / Ames).